The sequence spans 222 residues: ATP synthase F(0) complex subunit a (222 aa).

6 consecutive transmembrane segments (helical) span residues 8 to 28 (FFYV…ILLP), 64 to 84 (WSLM…LGLL), 93 to 113 (QLTV…VPGF), 127 to 147 (QGTP…SLLI), 160 to 180 (ITAG…LSSI), and 197 to 219 (ILEL…LYLH).

Belongs to the ATPase A chain family. In terms of assembly, component of the ATP synthase complex composed at least of ATP5F1A/subunit alpha, ATP5F1B/subunit beta, ATP5MC1/subunit c (homooctomer), MT-ATP6/subunit a, MT-ATP8/subunit 8, ATP5ME/subunit e, ATP5MF/subunit f, ATP5MG/subunit g, ATP5MK/subunit k, ATP5MJ/subunit j, ATP5F1C/subunit gamma, ATP5F1D/subunit delta, ATP5F1E/subunit epsilon, ATP5PF/subunit F6, ATP5PB/subunit b, ATP5PD/subunit d, ATP5PO/subunit OSCP. ATP synthase complex consists of a soluble F(1) head domain (subunits alpha(3) and beta(3)) - the catalytic core - and a membrane F(0) domain - the membrane proton channel (subunits c, a, 8, e, f, g, k and j). These two domains are linked by a central stalk (subunits gamma, delta, and epsilon) rotating inside the F1 region and a stationary peripheral stalk (subunits F6, b, d, and OSCP). Interacts with DNAJC30; interaction is direct.

The protein resides in the mitochondrion inner membrane. The catalysed reaction is H(+)(in) = H(+)(out). In terms of biological role, subunit a, of the mitochondrial membrane ATP synthase complex (F(1)F(0) ATP synthase or Complex V) that produces ATP from ADP in the presence of a proton gradient across the membrane which is generated by electron transport complexes of the respiratory chain. ATP synthase complex consist of a soluble F(1) head domain - the catalytic core - and a membrane F(1) domain - the membrane proton channel. These two domains are linked by a central stalk rotating inside the F(1) region and a stationary peripheral stalk. During catalysis, ATP synthesis in the catalytic domain of F(1) is coupled via a rotary mechanism of the central stalk subunits to proton translocation. With the subunit c (ATP5MC1), forms the proton-conducting channel in the F(0) domain, that contains two crucial half-channels (inlet and outlet) that facilitate proton movement from the mitochondrial intermembrane space (IMS) into the matrix. Protons are taken up via the inlet half-channel and released through the outlet half-channel, following a Grotthuss mechanism. The polypeptide is ATP synthase F(0) complex subunit a (Loxodonta africana (African elephant)).